Reading from the N-terminus, the 308-residue chain is Porphobilinogen deaminase (308 aa).

Residue cysteine 241 is modified to S-(dipyrrolylmethanemethyl)cysteine.

This sequence belongs to the HMBS family. In terms of assembly, monomer. Dipyrromethane serves as cofactor.

The enzyme catalyses 4 porphobilinogen + H2O = hydroxymethylbilane + 4 NH4(+). The protein operates within porphyrin-containing compound metabolism; protoporphyrin-IX biosynthesis; coproporphyrinogen-III from 5-aminolevulinate: step 2/4. Functionally, tetrapolymerization of the monopyrrole PBG into the hydroxymethylbilane pre-uroporphyrinogen in several discrete steps. In Staphylococcus epidermidis (strain ATCC 35984 / DSM 28319 / BCRC 17069 / CCUG 31568 / BM 3577 / RP62A), this protein is Porphobilinogen deaminase.